The following is a 405-amino-acid chain: Threonine synthase (405 aa).

Lys-106 is modified (N6-(pyridoxal phosphate)lysine). Residues Asn-132, 233 to 237 (GNAGN), and Thr-371 contribute to the pyridoxal 5'-phosphate site.

It belongs to the threonine synthase family. Requires pyridoxal 5'-phosphate as cofactor.

The catalysed reaction is O-phospho-L-homoserine + H2O = L-threonine + phosphate. Its pathway is amino-acid biosynthesis; L-threonine biosynthesis; L-threonine from L-aspartate: step 5/5. Functionally, catalyzes the gamma-elimination of phosphate from L-phosphohomoserine and the beta-addition of water to produce L-threonine. The polypeptide is Threonine synthase (thrC) (Methanocaldococcus jannaschii (strain ATCC 43067 / DSM 2661 / JAL-1 / JCM 10045 / NBRC 100440) (Methanococcus jannaschii)).